The chain runs to 121 residues: Large ribosomal subunit protein uL22 (121 aa).

It belongs to the universal ribosomal protein uL22 family. Part of the 50S ribosomal subunit.

Functionally, this protein binds specifically to 23S rRNA; its binding is stimulated by other ribosomal proteins, e.g. L4, L17, and L20. It is important during the early stages of 50S assembly. It makes multiple contacts with different domains of the 23S rRNA in the assembled 50S subunit and ribosome. Its function is as follows. The globular domain of the protein is located near the polypeptide exit tunnel on the outside of the subunit, while an extended beta-hairpin is found that lines the wall of the exit tunnel in the center of the 70S ribosome. The chain is Large ribosomal subunit protein uL22 from Kocuria rhizophila (strain ATCC 9341 / DSM 348 / NBRC 103217 / DC2201).